A 456-amino-acid polypeptide reads, in one-letter code: Rap guanine nucleotide exchange factor-like 1 (456 aa).

The Ras-GEF domain occupies 218–454; it reads EPEDVANHLT…FELSYKLEAN (237 aa).

In terms of biological role, probable guanine nucleotide exchange factor (GEF). This is Rap guanine nucleotide exchange factor-like 1 (RAPGEFL1) from Pongo pygmaeus (Bornean orangutan).